A 524-amino-acid polypeptide reads, in one-letter code: Pentatricopeptide repeat-containing protein At1g02150 (524 aa).

PPR repeat units lie at residues Asp-168–Leu-202, His-203–Leu-237, Asp-238–Asp-268, Asn-274–Arg-304, Asn-309–Val-339, Pro-344–Tyr-378, and Asp-379–Pro-413.

It belongs to the PPR family. P subfamily.

The polypeptide is Pentatricopeptide repeat-containing protein At1g02150 (Arabidopsis thaliana (Mouse-ear cress)).